A 181-amino-acid chain; its full sequence is MYRLLALVALASMADCSALLTHITGTSIPGQLFINRQFLAVNPDGAVYGTIESDNVDTIFKRVAVDRNRIVIQNAITCVYLCMDRCGQLYGSKTLSKDCFMREFLEKNNYNTYYKVYDRKLTYVALKNDGTPRKLQISKSRKLGKLSVYAMALLKRLSFPIYTSCPNIKSEIIVRHRKCHV.

The signal sequence occupies residues 1-16 (MYRLLALVALASMADC).

It belongs to the heparin-binding growth factors family.

The protein is Fibroblast growth factor homolog (FGF) of Lepidoptera (butterflies and moths).